The following is a 344-amino-acid chain: Glycerol-3-phosphate dehydrogenase [NAD(P)+] 2 (344 aa).

NADPH-binding residues include Ser12, Trp13, Arg33, Arg34, and Lys107. Residues Lys107, Gly138, and Ser140 each coordinate sn-glycerol 3-phosphate. An NADPH-binding site is contributed by Ala142. Residues Lys193, Asp246, Ser256, Arg257, and Asn258 each coordinate sn-glycerol 3-phosphate. Lys193 serves as the catalytic Proton acceptor. Arg257 is an NADPH binding site. Residues Val281 and Glu283 each contribute to the NADPH site.

This sequence belongs to the NAD-dependent glycerol-3-phosphate dehydrogenase family.

The protein localises to the cytoplasm. The enzyme catalyses sn-glycerol 3-phosphate + NAD(+) = dihydroxyacetone phosphate + NADH + H(+). The catalysed reaction is sn-glycerol 3-phosphate + NADP(+) = dihydroxyacetone phosphate + NADPH + H(+). The protein operates within membrane lipid metabolism; glycerophospholipid metabolism. In terms of biological role, catalyzes the reduction of the glycolytic intermediate dihydroxyacetone phosphate (DHAP) to sn-glycerol 3-phosphate (G3P), the key precursor for phospholipid synthesis. The protein is Glycerol-3-phosphate dehydrogenase [NAD(P)+] 2 of Salinibacter ruber (strain DSM 13855 / M31).